The sequence spans 765 residues: Protein transport protein Sec23A (765 aa).

Thr-2 carries the post-translational modification N-acetylthreonine. The Zn(2+) site is built by Cys-61, Cys-66, Cys-85, and Cys-88. Position 308 is a phosphothreonine (Thr-308). The stretch at 632–718 is one Gelsolin-like repeat; sequence PEPVLLDSSS…EHGGSQARFL (87 aa).

This sequence belongs to the SEC23/SEC24 family. SEC23 subfamily. COPII is composed of at least five proteins: the Sec23/24 complex, the Sec13/31 complex and Sar1. Interacts with SEC23IP. Interacts with HTR4. Interacts with SEC16A. Interacts with SLC6A4. Interacts (as part of the Sec23/24 complex) with SEC22B; recruits SEC22B into COPII-coated vesicles and allows the transport of this cargo from the endoplasmic reticulum to the Golgi. Interacts (via Gelsolin-like repeat) with MIA2 and MIA3; specifically involved in the transport of large cargos like the collagen COL7A1. Interacts with DDHD1. Interacts with TMEM39A. Interacts with SACM1L; this interaction is reduced in the absence of TMEM39A. Interacts with kinase FAM20C; transport of FAM20C from the endoplasmic reticulum to the Golgi is likely to be mediated by COPII vesicles. High levels in brain and fibroblasts.

The protein localises to the cytoplasmic vesicle. It is found in the COPII-coated vesicle membrane. The protein resides in the endoplasmic reticulum membrane. Its subcellular location is the cytoplasm. It localises to the cytosol. Its function is as follows. Component of the coat protein complex II (COPII) which promotes the formation of transport vesicles from the endoplasmic reticulum (ER). The coat has two main functions, the physical deformation of the endoplasmic reticulum membrane into vesicles and the selection of cargo molecules for their transport to the Golgi complex. Required for the translocation of insulin-induced glucose transporter SLC2A4/GLUT4 to the cell membrane. This Mus musculus (Mouse) protein is Protein transport protein Sec23A.